Reading from the N-terminus, the 173-residue chain is Mitochondrial holo-[acyl-carrier-protein] synthase (173 aa).

This sequence belongs to the P-Pant transferase superfamily. AcpS family.

It localises to the mitochondrion. The catalysed reaction is apo-[ACP] + CoA = holo-[ACP] + adenosine 3',5'-bisphosphate + H(+). Transfers the 4'-phosphopantetheine moiety from coenzyme A to a Ser of mitochondrial acyl-carrier-protein. This Saccharomyces cerevisiae (strain ATCC 204508 / S288c) (Baker's yeast) protein is Mitochondrial holo-[acyl-carrier-protein] synthase (PPT2).